The following is a 638-amino-acid chain: Ubiquitin-associated and SH3 domain-containing protein B (638 aa).

Residue Ser-9 is modified to Phosphoserine. Thr-12 is subject to Phosphothreonine. The UBA domain maps to 23–65 (TVKHGSALDVLLSMGFPRARAQKALASTGGRSVQAACDWLFSH). An SH3 domain is found at 243-308 (ANHETLQVIY…PENYITKADE (66 aa)). A protein tyrosine phosphatase region spans residues 369–638 (GPQKRCLFVC…FNWRETLLQE (270 aa)). Arg-379 is a catalytic residue. His-380 acts as the Tele-phosphohistidine intermediate in catalysis. His-565 is an active-site residue.

As to quaternary structure, homodimer. Interacts with JAK2 (in vitro). Interacts with CBL. Part of a complex containing CBL and activated EGFR. Interacts with ubiquitin and with mono-ubiquitinated proteins. Interacts with ZAP70 (ubiquitinated form). Detected in splenic T-cells and B-cells, total spleen, skeletal muscle, heart, lung, kidney, thymus, brain and liver (at protein level). Highly expressed in brain. Detected in heart, spleen, lung, liver, kidney and testis.

It localises to the cytoplasm. The protein localises to the nucleus. The enzyme catalyses O-phospho-L-tyrosyl-[protein] + H2O = L-tyrosyl-[protein] + phosphate. Interferes with CBL-mediated down-regulation and degradation of receptor-type tyrosine kinases. Promotes accumulation of activated target receptors, such as T-cell receptors and EGFR, on the cell surface. Exhibits tyrosine phosphatase activity toward several substrates including EGFR, FAK, SYK, and ZAP70. Down-regulates proteins that are dually modified by both protein tyrosine phosphorylation and ubiquitination. This chain is Ubiquitin-associated and SH3 domain-containing protein B (Ubash3b), found in Mus musculus (Mouse).